A 1057-amino-acid chain; its full sequence is Carbamoyl phosphate synthase large chain (1057 aa).

Residues 1 to 401 (MPKRNDIKTI…SLLKAIRSLE (401 aa)) are carboxyphosphate synthetic domain. The ATP site is built by arginine 129, arginine 169, glycine 175, glycine 176, lysine 208, isoleucine 210, glutamate 215, glycine 241, isoleucine 242, histidine 243, glutamine 284, and glutamate 298. The ATP-grasp 1 domain maps to 133–327 (RNLMNELNEP…IAKLAAKIAV (195 aa)). Positions 284, 298, and 300 each coordinate Mg(2+). Residues glutamine 284, glutamate 298, and asparagine 300 each contribute to the Mn(2+) site. The interval 402 to 546 (YGVHHLGLPN…YGTYETENES (145 aa)) is oligomerization domain. Positions 547–929 (IRSDKKKVVV…ALYKGLVASG (383 aa)) are carbamoyl phosphate synthetic domain. One can recognise an ATP-grasp 2 domain in the interval 671-861 (EALMQRIEIP…MANLAMKAIL (191 aa)). ATP-binding residues include arginine 707, arginine 746, leucine 748, glutamate 752, glycine 777, valine 778, histidine 779, serine 780, glutamine 820, and glutamate 832. Mg(2+) contacts are provided by glutamine 820, glutamate 832, and asparagine 834. 3 residues coordinate Mn(2+): glutamine 820, glutamate 832, and asparagine 834. An MGS-like domain is found at 930-1057 (LQVKDHGTVL…ESMTFNMNQM (128 aa)). The segment at 930–1057 (LQVKDHGTVL…ESMTFNMNQM (128 aa)) is allosteric domain.

Belongs to the CarB family. As to quaternary structure, composed of two chains; the small (or glutamine) chain promotes the hydrolysis of glutamine to ammonia, which is used by the large (or ammonia) chain to synthesize carbamoyl phosphate. Tetramer of heterodimers (alpha,beta)4. Mg(2+) is required as a cofactor. Mn(2+) serves as cofactor.

It catalyses the reaction hydrogencarbonate + L-glutamine + 2 ATP + H2O = carbamoyl phosphate + L-glutamate + 2 ADP + phosphate + 2 H(+). The enzyme catalyses hydrogencarbonate + NH4(+) + 2 ATP = carbamoyl phosphate + 2 ADP + phosphate + 2 H(+). The protein operates within amino-acid biosynthesis; L-arginine biosynthesis; carbamoyl phosphate from bicarbonate: step 1/1. It participates in pyrimidine metabolism; UMP biosynthesis via de novo pathway; (S)-dihydroorotate from bicarbonate: step 1/3. Its function is as follows. Large subunit of the glutamine-dependent carbamoyl phosphate synthetase (CPSase). CPSase catalyzes the formation of carbamoyl phosphate from the ammonia moiety of glutamine, carbonate, and phosphate donated by ATP, constituting the first step of 2 biosynthetic pathways, one leading to arginine and/or urea and the other to pyrimidine nucleotides. The large subunit (synthetase) binds the substrates ammonia (free or transferred from glutamine from the small subunit), hydrogencarbonate and ATP and carries out an ATP-coupled ligase reaction, activating hydrogencarbonate by forming carboxy phosphate which reacts with ammonia to form carbamoyl phosphate. This Macrococcus caseolyticus (strain JCSC5402) (Macrococcoides caseolyticum) protein is Carbamoyl phosphate synthase large chain.